Here is a 127-residue protein sequence, read N- to C-terminus: Snaclec bothroinsularin subunit beta (127 aa).

Cystine bridges form between C2–C13, C30–C123, and C100–C115. The C-type lectin domain occupies 9 to 124; it reads YEGSCYRVFE…CTKLEYFVCE (116 aa).

Belongs to the snaclec family. As to quaternary structure, heterodimer of subunits alpha and beta; disulfide-linked. In terms of tissue distribution, expressed by the venom gland.

It is found in the secreted. Thrombin and prothrombin (F2) inhibitor. The IC(50) of thrombin-induced platelet aggregation and fibrinocoagulation is 62 and 35 nM, respectively. Its inhibitory activity is at least 10-fold lower than that observed for other thrombin inhibitors. The sequence is that of Snaclec bothroinsularin subunit beta from Bothrops insularis (Golden lancehead).